Consider the following 298-residue polypeptide: MQDLSAVKAFHALCQHKSLTAAAKALEQPKSTLSRRLAQLEEDLGQSLLMRQGNRLTLTKAGEVFAVYSEQLLELANKSQEALQELNNQVTGELTLVVHPNLIRGWLSQVLDEFMQQHSTLKIRLLSQFQHSDEVFEPDLIIWIEHAAPMGYRKERLGYWRYATYASPKYLAHRDKPTHPRELIHHPWIDFIACRRAELELHHPEFGSYSLPALESRLQSDNLAMQADAIAKGRGIGLLPTWFANGFETAHPGSLIPCVNGWQSQPTEINCFYPLGRHPLRLRLFIDALRQARPDEWQ.

The HTH lysR-type domain occupies 1 to 59 (MQDLSAVKAFHALCQHKSLTAAAKALEQPKSTLSRRLAQLEEDLGQSLLMRQGNRLTLT). Positions 19 to 38 (LTAAAKALEQPKSTLSRRLA) form a DNA-binding region, H-T-H motif.

This sequence belongs to the LysR transcriptional regulatory family.

Transcription activation of the irgA gene. In the presence of sufficient iron, transcription of both irgA and irgB is negatively regulated by a fur-like protein. In low iron conditions, negative regulation of transcription is removed, and production of IrgB leads to positive transcriptional activation of irgA. The polypeptide is Iron-regulated virulence regulatory protein IrgB (irgB) (Vibrio cholerae serotype O1 (strain ATCC 39541 / Classical Ogawa 395 / O395)).